The primary structure comprises 228 residues: Latherin (228 aa).

The signal sequence occupies residues 1 to 20; it reads MLKVSCLFVLLCGLLVPSSA. Cysteine 153 and cysteine 196 form a disulfide bridge.

The protein belongs to the BPI/LBP/Plunc superfamily. Plunc family. Monomer. In terms of processing, no sign of N-X-[ST] acceptor site even though reported as N-glycosylated. In terms of tissue distribution, found in sweat (at protein level).

The protein localises to the secreted. Its function is as follows. Major protein in sweat, has surfactant properties. Has a role in temperature regulation by having a capacity to make hydrophobic surfaces wettable and so can function in promoting spreading and evaporation of sweat. The chain is Latherin (LATH) from Equus caballus (Horse).